Consider the following 4158-residue polypeptide: Dynein axonemal heavy chain 6 (4158 aa).

A stem region spans residues M1 to T1433. I192 to L199 contributes to the ATP binding site. A coiled-coil region spans residues C805–A859. 4 AAA regions span residues Y1434–M1655, S1715–S1948, K2058–G2306, and D2408–R2659. Residues G1472–T1479, G1753–T1760, G2096–S2103, and G2447–Q2454 each bind ATP. The stalk stretch occupies residues S2676 to L2961. Positions K2901–V2996 form a coiled coil. AAA stretches follow at residues L3042–T3272 and L3509–L3730.

Belongs to the dynein heavy chain family. As to quaternary structure, the dynein complex consists of at least two heavy chains and a number of intermediate and light chains. In terms of tissue distribution, expressed in several tissues, including brain, pituitary, testis and trachea, with highest levels in testis.

Its subcellular location is the cytoplasm. The protein resides in the cytoskeleton. It is found in the cilium axoneme. In terms of biological role, force generating protein of respiratory cilia. Produces force towards the minus ends of microtubules. Dynein has ATPase activity; the force-producing power stroke is thought to occur on release of ADP. The sequence is that of Dynein axonemal heavy chain 6 from Homo sapiens (Human).